The following is a 110-amino-acid chain: UPF0122 protein BCA_3946 (110 aa).

It belongs to the UPF0122 family.

In terms of biological role, might take part in the signal recognition particle (SRP) pathway. This is inferred from the conservation of its genetic proximity to ftsY/ffh. May be a regulatory protein. The polypeptide is UPF0122 protein BCA_3946 (Bacillus cereus (strain 03BB102)).